Reading from the N-terminus, the 92-residue chain is YcgL domain-containing protein Sputcn32_1766 (92 aa).

Residues 1-85 (MLCTVYKSTR…PQVNLLAEHK (85 aa)) enclose the YcgL domain.

The sequence is that of YcgL domain-containing protein Sputcn32_1766 from Shewanella putrefaciens (strain CN-32 / ATCC BAA-453).